The following is a 282-amino-acid chain: 4-diphosphocytidyl-2-C-methyl-D-erythritol kinase (282 aa).

Residue lysine 9 is part of the active site. An ATP-binding site is contributed by proline 98–serine 108. Aspartate 140 is a catalytic residue.

This sequence belongs to the GHMP kinase family. IspE subfamily. Homodimer.

It carries out the reaction 4-CDP-2-C-methyl-D-erythritol + ATP = 4-CDP-2-C-methyl-D-erythritol 2-phosphate + ADP + H(+). The protein operates within isoprenoid biosynthesis; isopentenyl diphosphate biosynthesis via DXP pathway; isopentenyl diphosphate from 1-deoxy-D-xylulose 5-phosphate: step 3/6. In terms of biological role, catalyzes the phosphorylation of the position 2 hydroxy group of 4-diphosphocytidyl-2C-methyl-D-erythritol. This Salmonella paratyphi B (strain ATCC BAA-1250 / SPB7) protein is 4-diphosphocytidyl-2-C-methyl-D-erythritol kinase.